A 348-amino-acid chain; its full sequence is D-erythrose-4-phosphate dehydrogenase (348 aa).

Residues 12–13 and arginine 81 contribute to the NAD(+) site; that span reads RI. Substrate contacts are provided by residues 154–156, arginine 200, 213–214, and arginine 236; these read SCT and TK. Residue cysteine 155 is the Nucleophile of the active site. An NAD(+)-binding site is contributed by asparagine 318.

This sequence belongs to the glyceraldehyde-3-phosphate dehydrogenase family. Epd subfamily. As to quaternary structure, homotetramer.

Its subcellular location is the cytoplasm. The catalysed reaction is D-erythrose 4-phosphate + NAD(+) + H2O = 4-phospho-D-erythronate + NADH + 2 H(+). The protein operates within cofactor biosynthesis; pyridoxine 5'-phosphate biosynthesis; pyridoxine 5'-phosphate from D-erythrose 4-phosphate: step 1/5. In terms of biological role, catalyzes the NAD-dependent conversion of D-erythrose 4-phosphate to 4-phosphoerythronate. The chain is D-erythrose-4-phosphate dehydrogenase from Salmonella schwarzengrund (strain CVM19633).